The sequence spans 111 residues: Large ribosomal subunit protein uL22 (111 aa).

It belongs to the universal ribosomal protein uL22 family. Part of the 50S ribosomal subunit.

In terms of biological role, this protein binds specifically to 23S rRNA; its binding is stimulated by other ribosomal proteins, e.g. L4, L17, and L20. It is important during the early stages of 50S assembly. It makes multiple contacts with different domains of the 23S rRNA in the assembled 50S subunit and ribosome. Functionally, the globular domain of the protein is located near the polypeptide exit tunnel on the outside of the subunit, while an extended beta-hairpin is found that lines the wall of the exit tunnel in the center of the 70S ribosome. The sequence is that of Large ribosomal subunit protein uL22 from Francisella tularensis subsp. tularensis (strain FSC 198).